The following is a 189-amino-acid chain: MKAIDKMTDNPPQEGLSGRKIIYDEDGKPCRSCNTLLDFQYVTGKISNGLKNLSSNGKLAGTGALTGEASELMPGSRTYRKVDPPDVEQLGRSSWTLLHSVAASYPAQPTDQQKGEMKQFLNIFSHIYPCNWCAKDFEKYIRENAPQVESREELGRWMCEAHNKVNKKLRKPKFDCNFWEKRWKDGWDE.

In terms of domain architecture, ERV/ALR sulfhydryl oxidase spans 83–183; the sequence is DPPDVEQLGR…FDCNFWEKRW (101 aa). FAD is bound by residues 88-95, His99, and Tyr128; that span reads EQLGRSSW. Intrachain disulfides connect Cys130/Cys133 and Cys159/Cys176. FAD contacts are provided by residues 159 to 171 and 182 to 183; these read CEAH…KLRK and RW.

In terms of assembly, homodimer. Interacts with MIA40, forming transient intermolecular disulfide bridges. The cofactor is FAD.

The protein resides in the mitochondrion intermembrane space. The catalysed reaction is 2 R'C(R)SH + O2 = R'C(R)S-S(R)CR' + H2O2. Functionally, FAD-dependent sulfhydryl oxidase that catalyzes disulfide bond formation. Required for the import and folding of small cysteine-containing proteins in the mitochondrial intermembrane space (IMS). Forms a redox cycle with MIA40 that involves a disulfide relay system. Important for maintaining the cysteine residues in MIA40 in an oxidized state. Reduced ERV1 is reoxidized by cytochrome c. Required for the maturation of cytoplasmic, but not of mitochondrial Fe/S proteins. The chain is Mitochondrial FAD-linked sulfhydryl oxidase ERV1 (ERV1) from Saccharomyces cerevisiae (strain ATCC 204508 / S288c) (Baker's yeast).